The sequence spans 368 residues: Peptide chain release factor 2 (368 aa).

Gln-250 is modified (N5-methylglutamine).

Belongs to the prokaryotic/mitochondrial release factor family. In terms of processing, methylated by PrmC. Methylation increases the termination efficiency of RF2.

The protein resides in the cytoplasm. Peptide chain release factor 2 directs the termination of translation in response to the peptide chain termination codons UGA and UAA. The polypeptide is Peptide chain release factor 2 (Chlamydia trachomatis serovar L2 (strain ATCC VR-902B / DSM 19102 / 434/Bu)).